Here is a 379-residue protein sequence, read N- to C-terminus: Odorant receptor 33b (379 aa).

Over 1-37 (MDLKPRVIRSEDIYRTYWLYWHLLGLESNFFLNRLLD) the chain is Cytoplasmic. The chain crosses the membrane as a helical span at residues 38-58 (LVITIFVTIWYPIHLILGLFM). At 59-64 (ERSLGD) the chain is on the extracellular side. A helical transmembrane segment spans residues 65 to 85 (VCKGLPITAACFFASFKFICF). Over 86 to 129 (RFKLSEIKEIEILFKELDQRALSREECEFFNQNTRREANFIWKS) the chain is Cytoplasmic. Residues 130-150 (FIVAYGLSNISAIASVLFGGG) form a helical membrane-spanning segment. Topologically, residues 151–165 (HKLLYPAWFPYDVQA) are extracellular. The helical transmembrane segment at 166-186 (TELIFWLSVTYQIAGVSLAIL) threads the bilayer. At 187–256 (QNLANDSYPP…LLRSTMNISQ (70 aa)) the chain is on the cytoplasmic side. A helical membrane pass occupies residues 257–277 (LGQFISSGVNISITLVNILFF). Residues 278 to 281 (ADNN) are Extracellular-facing. A helical transmembrane segment spans residues 282 to 302 (FAITYYGVYFLSMVLELFPCC). Residues 303–355 (YYGTLISVEMNQLTYAIYSSNWMSMNRSYSRILLIFMQLTLAEVQIKAGGMIG) are Cytoplasmic-facing. The chain crosses the membrane as a helical span at residues 356–376 (IGMNAFFATVRLAYSFFTLAM). Residues 377-379 (SLR) are Extracellular-facing.

It belongs to the insect chemoreceptor superfamily. Heteromeric odorant receptor channel (TC 1.A.69) family. Or2a subfamily. Interacts with Orco. Complexes exist early in the endomembrane system in olfactory sensory neurons (OSNs), coupling these complexes to the conserved ciliary trafficking pathway. In terms of tissue distribution, expressed in 15 cells in the antenna but not the maxillary palp.

The protein resides in the cell membrane. Its function is as follows. Odorant receptor which mediates acceptance or avoidance behavior, depending on its substrates. The odorant receptor repertoire encodes a large collection of odor stimuli that vary widely in identity, intensity, and duration. May form a complex with Orco to form odorant-sensing units, providing sensitive and prolonged odorant signaling and calcium permeability. Involved in the behavioral responses to pentyl acetate and pyrazines. This is Odorant receptor 33b (Or33b) from Drosophila melanogaster (Fruit fly).